The primary structure comprises 314 residues: Small ribosomal subunit biogenesis GTPase RsgA (314 aa).

The interval 1–21 is disordered; it reads MKRAPTKQPAKPAARGGERAQ. A CP-type G domain is found at 85–246; that stretch reads SDQFKSKLFA…LIDSPGFQEF (162 aa). GTP-binding positions include 134–137 and 188–196; these read NKID and GQSGMGKST. Residues Cys270, Cys275, His277, and Cys283 each coordinate Zn(2+).

Belongs to the TRAFAC class YlqF/YawG GTPase family. RsgA subfamily. In terms of assembly, monomer. Associates with 30S ribosomal subunit, binds 16S rRNA. The cofactor is Zn(2+).

The protein localises to the cytoplasm. Functionally, one of several proteins that assist in the late maturation steps of the functional core of the 30S ribosomal subunit. Helps release RbfA from mature subunits. May play a role in the assembly of ribosomal proteins into the subunit. Circularly permuted GTPase that catalyzes slow GTP hydrolysis, GTPase activity is stimulated by the 30S ribosomal subunit. This chain is Small ribosomal subunit biogenesis GTPase RsgA, found in Burkholderia mallei (strain ATCC 23344).